The chain runs to 304 residues: Acetylglutamate kinase (304 aa).

Residues Gly-64–Gly-65, Arg-86, and Asn-181 contribute to the substrate site.

It belongs to the acetylglutamate kinase family. ArgB subfamily.

Its subcellular location is the plastid. The protein localises to the chloroplast. The catalysed reaction is N-acetyl-L-glutamate + ATP = N-acetyl-L-glutamyl 5-phosphate + ADP. It functions in the pathway amino-acid biosynthesis; L-arginine biosynthesis; N(2)-acetyl-L-ornithine from L-glutamate: step 2/4. Functionally, catalyzes the ATP-dependent phosphorylation of N-acetyl-L-glutamate. The sequence is that of Acetylglutamate kinase from Cyanidium caldarium (Red alga).